We begin with the raw amino-acid sequence, 186 residues long: Large ribosomal subunit protein uL15 (186 aa).

The disordered stretch occupies residues 1–48; sequence MDLSSLRPAKGAVKARKRVGRGPGSGNGTTAGKGNKGQQSRSGYQRPV. Positions 21–35 are enriched in gly residues; that stretch reads RGPGSGNGTTAGKGN.

It belongs to the universal ribosomal protein uL15 family. In terms of assembly, part of the 50S ribosomal subunit.

Binds to the 23S rRNA. The protein is Large ribosomal subunit protein uL15 of Chlorobaculum tepidum (strain ATCC 49652 / DSM 12025 / NBRC 103806 / TLS) (Chlorobium tepidum).